The chain runs to 399 residues: Zinc finger HIT domain-containing protein 2 (399 aa).

An N-acetylmethionine modification is found at Met-1. Residues Cys-7, Cys-10, Cys-22, Cys-25, Cys-30, Cys-34, His-38, and Cys-41 each contribute to the Zn(2+) site. The HIT-type zinc-finger motif lies at 7-41 (CGFCPTGEAQPARYTCPRCNVPYCSLRCYRAHGSC). Disordered regions lie at residues 71–97 (LRQQ…GLSG) and 141–166 (EELG…PEPV).

Interacts (via HIT-type zinc finger) with RUVBL2 in the presence of ATP or ADP; shows a stronger interaction in the presence of ADP.

May act as a bridging factor mediating the interaction between the R2TP/Prefoldin-like (R2TP/PFDL) complex and U5 small nuclear ribonucleoprotein (U5 snRNP). Required for the interaction of R2TP complex subunit RPAP3 and prefoldin-like subunit URI1 with U5 snRNP proteins EFTUD2 and PRPF8. May play a role in regulating the composition of the U5 snRNP complex. This Bos taurus (Bovine) protein is Zinc finger HIT domain-containing protein 2 (ZNHIT2).